Consider the following 486-residue polypeptide: UDP-N-acetylmuramoyl-L-alanyl-D-glutamate--2,6-diaminopimelate ligase (486 aa).

Ser-26 lines the UDP-N-acetyl-alpha-D-muramoyl-L-alanyl-D-glutamate pocket. 104–110 is a binding site for ATP; sequence GTNGKTS. Residues 152–153, Ser-179, Gln-185, and Arg-187 contribute to the UDP-N-acetyl-alpha-D-muramoyl-L-alanyl-D-glutamate site; that span reads TT. The residue at position 219 (Lys-219) is an N6-carboxylysine. Residues Arg-383, 407-410, Gly-455, and Glu-459 each bind meso-2,6-diaminopimelate; that span reads DNPR. The Meso-diaminopimelate recognition motif motif lies at 407-410; sequence DNPR.

Belongs to the MurCDEF family. MurE subfamily. Mg(2+) is required as a cofactor. Carboxylation is probably crucial for Mg(2+) binding and, consequently, for the gamma-phosphate positioning of ATP.

The protein localises to the cytoplasm. It carries out the reaction UDP-N-acetyl-alpha-D-muramoyl-L-alanyl-D-glutamate + meso-2,6-diaminopimelate + ATP = UDP-N-acetyl-alpha-D-muramoyl-L-alanyl-gamma-D-glutamyl-meso-2,6-diaminopimelate + ADP + phosphate + H(+). The protein operates within cell wall biogenesis; peptidoglycan biosynthesis. Functionally, catalyzes the addition of meso-diaminopimelic acid to the nucleotide precursor UDP-N-acetylmuramoyl-L-alanyl-D-glutamate (UMAG) in the biosynthesis of bacterial cell-wall peptidoglycan. This chain is UDP-N-acetylmuramoyl-L-alanyl-D-glutamate--2,6-diaminopimelate ligase, found in Caulobacter vibrioides (strain ATCC 19089 / CIP 103742 / CB 15) (Caulobacter crescentus).